Consider the following 280-residue polypeptide: Polyamine aminopropyltransferase 2 (280 aa).

Positions 2-237 constitute a PABS domain; that stretch reads ELWLDEALEL…GIIGFTYCSK (236 aa). An S-methyl-5'-thioadenosine-binding site is contributed by glutamine 33. The spermidine site is built by histidine 64 and aspartate 88. S-methyl-5'-thioadenosine-binding positions include glutamate 108 and 139–140; that span reads DG. Aspartate 157 serves as the catalytic Proton acceptor. 157–160 is a spermidine binding site; the sequence is DSSD. Residue proline 164 participates in S-methyl-5'-thioadenosine binding.

The protein belongs to the spermidine/spermine synthase family. Homodimer or homotetramer.

It localises to the cytoplasm. The enzyme catalyses S-adenosyl 3-(methylsulfanyl)propylamine + putrescine = S-methyl-5'-thioadenosine + spermidine + H(+). It functions in the pathway amine and polyamine biosynthesis; spermidine biosynthesis; spermidine from putrescine: step 1/1. Functionally, catalyzes the irreversible transfer of a propylamine group from the amino donor S-adenosylmethioninamine (decarboxy-AdoMet) to putrescine (1,4-diaminobutane) to yield spermidine. The polypeptide is Polyamine aminopropyltransferase 2 (Leptospira interrogans serogroup Icterohaemorrhagiae serovar Lai (strain 56601)).